Reading from the N-terminus, the 92-residue chain is MGRSLKKGPFCDEHLMKKIEKLNETGQKQVIKTWSRRSTIFPQFVGHTIAVYDGRKHVPVYITEDMVGHKLGEFAPTRTFRGHAGDDKKTKR.

Belongs to the universal ribosomal protein uS19 family.

Protein S19 forms a complex with S13 that binds strongly to the 16S ribosomal RNA. In Geobacillus sp. (strain WCH70), this protein is Small ribosomal subunit protein uS19.